The following is a 1049-amino-acid chain: Solvent-resistant pump membrane transporter SrpB (1049 aa).

12 consecutive transmembrane segments (helical) span residues 10 to 30, 339 to 359, 366 to 386, 392 to 412, 440 to 460, 470 to 490, 542 to 562, 871 to 891, 895 to 915, 927 to 947, 973 to 993, and 1008 to 1028; these read IFAW…LAKM, SVVH…YLFL, LIPT…LPYF, VLTM…AIVV, GALV…AFFG, FAIT…VFTP, LAFL…PKAF, APLL…ALYE, VPVS…LATL, VGLM…VEFA, ILMT…ASGA, and GMIT…VVVV.

This sequence belongs to the resistance-nodulation-cell division (RND) (TC 2.A.6) family.

Its subcellular location is the cell inner membrane. In terms of biological role, the inner membrane transporter component of an organic solvent efflux pump. Involved in export of a number of low log POW compounds including hexane (log POW 3.5), toluene (log POW 2.5) and dimethylphthalate (log POW 2.3). The solvent resistance phenotype has been postulated to depend on the operon expression level. The polypeptide is Solvent-resistant pump membrane transporter SrpB (srpB) (Pseudomonas putida (Arthrobacter siderocapsulatus)).